A 486-amino-acid polypeptide reads, in one-letter code: UDP-N-acetylmuramoyl-L-alanyl-D-glutamate--2,6-diaminopimelate ligase (486 aa).

Position 34 (serine 34) interacts with UDP-N-acetyl-alpha-D-muramoyl-L-alanyl-D-glutamate. Residue 112-118 coordinates ATP; that stretch reads GTAGKTS. UDP-N-acetyl-alpha-D-muramoyl-L-alanyl-D-glutamate contacts are provided by residues 154–155, serine 181, glutamine 187, and arginine 189; that span reads TT. The residue at position 221 (lysine 221) is an N6-carboxylysine. Residues arginine 385, 409–412, glycine 457, and glutamate 461 contribute to the meso-2,6-diaminopimelate site; that span reads DNPR. The short motif at 409–412 is the Meso-diaminopimelate recognition motif element; the sequence is DNPR.

Belongs to the MurCDEF family. MurE subfamily. It depends on Mg(2+) as a cofactor. Carboxylation is probably crucial for Mg(2+) binding and, consequently, for the gamma-phosphate positioning of ATP.

It localises to the cytoplasm. The catalysed reaction is UDP-N-acetyl-alpha-D-muramoyl-L-alanyl-D-glutamate + meso-2,6-diaminopimelate + ATP = UDP-N-acetyl-alpha-D-muramoyl-L-alanyl-gamma-D-glutamyl-meso-2,6-diaminopimelate + ADP + phosphate + H(+). It participates in cell wall biogenesis; peptidoglycan biosynthesis. In terms of biological role, catalyzes the addition of meso-diaminopimelic acid to the nucleotide precursor UDP-N-acetylmuramoyl-L-alanyl-D-glutamate (UMAG) in the biosynthesis of bacterial cell-wall peptidoglycan. This Rhizobium meliloti (strain 1021) (Ensifer meliloti) protein is UDP-N-acetylmuramoyl-L-alanyl-D-glutamate--2,6-diaminopimelate ligase.